The following is a 1128-amino-acid chain: Zinc finger protein 654 (1128 aa).

Residues Gly-498 to His-523 form a disordered region. 5 consecutive C2H2-type zinc fingers follow at residues Phe-572–His-594, Phe-746–His-771, Gly-787–His-809, Tyr-815–His-839, and Ala-844–His-868. A disordered region spans residues Asp-891–Ser-951. Polar residues-rich tracts occupy residues Asn-903 to Ser-915 and Ser-937 to Ser-951. Residues Ser-1123 and Ser-1127 each carry the phosphoserine modification.

The protein belongs to the krueppel C2H2-type zinc-finger protein family.

It is found in the nucleus. In terms of biological role, may be involved in transcriptional regulation. The sequence is that of Zinc finger protein 654 from Homo sapiens (Human).